The primary structure comprises 368 residues: MLYYFLRYINEMFNPPGMRVIEYLTFRASAAAITALLITVFAGPSFIRFLKSHFLEPVKEEAPEEHRKKKDVPTMGGLLIILAVEISALLWAKVDDPHVWLIMLAVLWMGLIGFIDDYRKVVLKIKGGLAGKYKLVGQVALGLVVGFYTWNDPAFSVLLSKTSVPFLKNFSVDYGIFYIPVVIFIITAVSNAVNLTDGLDGLAAGNAAIVTMALGLFAYLGGNAVYAGYLSIPFISGAGEIAVVSMAIVMACVGFLWFNSNPAEVFMGDTGSLALGSAIAVIALMIKQELLLPVLAGIFFIETLSVSMQVAWFKFTKWRFKEGRRIFLMAPLHHHFQLKGWPEQKIVIRFWIISILLFLTSLMTLKLR.

Helical transmembrane passes span 30 to 50 (AAAITALLITVFAGPSFIRFL), 72 to 92 (VPTMGGLLIILAVEISALLWA), 98 to 118 (HVWLIMLAVLWMGLIGFIDDY), 139 to 159 (VALGLVVGFYTWNDPAFSVLL), 170 to 190 (FSVDYGIFYIPVVIFIITAVS), 201 to 221 (GLAAGNAAIVTMALGLFAYLG), 238 to 258 (AGEIAVVSMAIVMACVGFLWF), 262 to 284 (PAEVFMGDTGSLALGSAIAVIAL), and 345 to 365 (KIVIRFWIISILLFLTSLMTL).

The protein belongs to the glycosyltransferase 4 family. MraY subfamily. The cofactor is Mg(2+).

The protein localises to the cell inner membrane. The catalysed reaction is UDP-N-acetyl-alpha-D-muramoyl-L-alanyl-gamma-D-glutamyl-meso-2,6-diaminopimeloyl-D-alanyl-D-alanine + di-trans,octa-cis-undecaprenyl phosphate = di-trans,octa-cis-undecaprenyl diphospho-N-acetyl-alpha-D-muramoyl-L-alanyl-D-glutamyl-meso-2,6-diaminopimeloyl-D-alanyl-D-alanine + UMP. It participates in cell wall biogenesis; peptidoglycan biosynthesis. Functionally, catalyzes the initial step of the lipid cycle reactions in the biosynthesis of the cell wall peptidoglycan: transfers peptidoglycan precursor phospho-MurNAc-pentapeptide from UDP-MurNAc-pentapeptide onto the lipid carrier undecaprenyl phosphate, yielding undecaprenyl-pyrophosphoryl-MurNAc-pentapeptide, known as lipid I. The sequence is that of Phospho-N-acetylmuramoyl-pentapeptide-transferase from Chlorobaculum parvum (strain DSM 263 / NCIMB 8327) (Chlorobium vibrioforme subsp. thiosulfatophilum).